The chain runs to 401 residues: Imidazolonepropionase (401 aa).

Fe(3+) contacts are provided by histidine 66 and histidine 68. Histidine 66 and histidine 68 together coordinate Zn(2+). Positions 75, 138, and 171 each coordinate 4-imidazolone-5-propanoate. Tyrosine 138 is a binding site for N-formimidoyl-L-glutamate. Residue histidine 236 participates in Fe(3+) binding. Residue histidine 236 coordinates Zn(2+). Glutamine 239 contacts 4-imidazolone-5-propanoate. Aspartate 311 is a Fe(3+) binding site. Aspartate 311 is a Zn(2+) binding site. N-formimidoyl-L-glutamate contacts are provided by asparagine 313 and glycine 315. Residue threonine 316 coordinates 4-imidazolone-5-propanoate.

The protein belongs to the metallo-dependent hydrolases superfamily. HutI family. Zn(2+) is required as a cofactor. It depends on Fe(3+) as a cofactor.

The protein localises to the cytoplasm. The catalysed reaction is 4-imidazolone-5-propanoate + H2O = N-formimidoyl-L-glutamate. Its pathway is amino-acid degradation; L-histidine degradation into L-glutamate; N-formimidoyl-L-glutamate from L-histidine: step 3/3. Functionally, catalyzes the hydrolytic cleavage of the carbon-nitrogen bond in imidazolone-5-propanoate to yield N-formimidoyl-L-glutamate. It is the third step in the universal histidine degradation pathway. In Acinetobacter baumannii (strain AB307-0294), this protein is Imidazolonepropionase.